A 301-amino-acid polypeptide reads, in one-letter code: ATP synthase gamma chain (301 aa).

This sequence belongs to the ATPase gamma chain family. As to quaternary structure, F-type ATPases have 2 components, CF(1) - the catalytic core - and CF(0) - the membrane proton channel. CF(1) has five subunits: alpha(3), beta(3), gamma(1), delta(1), epsilon(1). CF(0) has three main subunits: a, b and c.

Its subcellular location is the cell inner membrane. In terms of biological role, produces ATP from ADP in the presence of a proton gradient across the membrane. The gamma chain is believed to be important in regulating ATPase activity and the flow of protons through the CF(0) complex. This is ATP synthase gamma chain from Bordetella bronchiseptica (strain ATCC BAA-588 / NCTC 13252 / RB50) (Alcaligenes bronchisepticus).